The chain runs to 400 residues: Phosphoglycerate kinase (400 aa).

Residues 21–23 (DLN), Arg-36, 59–62 (HLGR), Arg-116, and Arg-149 each bind substrate. ATP-binding positions include Lys-200, Glu-317, and 343-346 (GGDT).

It belongs to the phosphoglycerate kinase family. In terms of assembly, monomer.

The protein localises to the cytoplasm. It catalyses the reaction (2R)-3-phosphoglycerate + ATP = (2R)-3-phospho-glyceroyl phosphate + ADP. Its pathway is carbohydrate degradation; glycolysis; pyruvate from D-glyceraldehyde 3-phosphate: step 2/5. In Blochmanniella floridana, this protein is Phosphoglycerate kinase.